An 882-amino-acid polypeptide reads, in one-letter code: Molybdenum cofactor sulfurase (882 aa).

Lys265 is modified (N6-(pyridoxal phosphate)lysine). Cys425 is a catalytic residue. A disordered region spans residues 496-546 (GQPLPLATPGEAGAPPEDSEAQNAVPAARARGSSSPQEDTSPHSGVWNNSP). The segment covering 527–546 (GSSSPQEDTSPHSGVWNNSP) has biased composition (polar residues). Phosphoserine occurs at positions 528 and 530. The MOSC domain occupies 707-868 (KQSSDFQRNA…LSVGSQVLPL (162 aa)).

The protein belongs to the class-V pyridoxal-phosphate-dependent aminotransferase family. MOCOS subfamily. The cofactor is pyridoxal 5'-phosphate. Ubiquitously expressed.

It catalyses the reaction Mo-molybdopterin + L-cysteine + AH2 = thio-Mo-molybdopterin + L-alanine + A + H2O. Its pathway is cofactor biosynthesis; molybdopterin biosynthesis. In terms of biological role, sulfurates the molybdenum cofactor. Sulfation of molybdenum is essential for xanthine dehydrogenase (XDH) and aldehyde oxidase (ADO) enzymes in which molybdenum cofactor is liganded by 1 oxygen and 1 sulfur atom in active form. This is Molybdenum cofactor sulfurase from Bos taurus (Bovine).